Reading from the N-terminus, the 607-residue chain is Chaperone protein DnaK (607 aa).

A Phosphothreonine; by autocatalysis modification is found at threonine 174. Over residues 579 to 592 the composition is skewed to low complexity; that stretch reads AQAQAQQQAGANAG. The tract at residues 579 to 607 is disordered; it reads AQAQAQQQAGANAGSDKKDEDVAEAEVVD.

It belongs to the heat shock protein 70 family.

Functionally, acts as a chaperone. The polypeptide is Chaperone protein DnaK (Fusobacterium nucleatum subsp. nucleatum (strain ATCC 25586 / DSM 15643 / BCRC 10681 / CIP 101130 / JCM 8532 / KCTC 2640 / LMG 13131 / VPI 4355)).